The chain runs to 338 residues: Phenylalanine--tRNA ligase alpha subunit (338 aa).

Glutamate 252 is a Mg(2+) binding site.

This sequence belongs to the class-II aminoacyl-tRNA synthetase family. Phe-tRNA synthetase alpha subunit type 1 subfamily. As to quaternary structure, tetramer of two alpha and two beta subunits. The cofactor is Mg(2+).

The protein resides in the cytoplasm. The enzyme catalyses tRNA(Phe) + L-phenylalanine + ATP = L-phenylalanyl-tRNA(Phe) + AMP + diphosphate + H(+). This is Phenylalanine--tRNA ligase alpha subunit from Azotobacter vinelandii (strain DJ / ATCC BAA-1303).